The following is a 107-amino-acid chain: UPF0145 protein Spro_1658 (107 aa).

Belongs to the UPF0145 family.

The protein is UPF0145 protein Spro_1658 of Serratia proteamaculans (strain 568).